Consider the following 950-residue polypeptide: Protocadherin alpha-9 (950 aa).

A signal peptide spans 1-29 (MLYSSRGDPEGQPLLLSLLILAMWVVGSG). Cadherin domains lie at 30–133 (QLHY…PPVF), 134–242 (PATQ…APVF), 243–350 (DRTL…APQL), 351–455 (TIKT…APAF), 456–565 (AQSE…APAL), and 588–678 (GVVV…APKS). The Extracellular portion of the chain corresponds to 30–697 (QLHYSVPEEA…GPEVTLVDVN (668 aa)). N-linked (GlcNAc...) asparagine glycosylation is found at Asn254 and Asn265. N-linked (GlcNAc...) asparagine glycosylation is present at Asn548. The chain crosses the membrane as a helical span at residues 698–718 (VYLIIAICAVSSLLVLTLLLY). Topologically, residues 719–950 (TVLRCSAMPT…GNSTTDNSDQ (232 aa)) are cytoplasmic. The PXXP 1 repeat unit spans residues 734-737 (PGKP). The segment at 734-894 (PGKPTLVCSS…PDKFIIPGSP (161 aa)) is 5 X 4 AA repeats of P-X-X-P. Disordered stretches follow at residues 770 to 808 (MAFSPGLSPCAGSTERTGEPSASSDSTGKPRQPNPDWRY), 827 to 856 (ILRAGPGGPDQQWPTVSSATPEPEAGEVSP), and 871 to 950 (YGPG…NSDQ). Polar residues predominate over residues 789–798 (PSASSDSTGK). PXXP repeat units follow at residues 799-802 (PRQP), 832-835 (PGGP), 873-876 (PGNP), and 891-894 (PGSP). Basic and acidic residues predominate over residues 909-923 (DKSDFITFGKKEETK).

Its subcellular location is the cell membrane. In terms of biological role, potential calcium-dependent cell-adhesion protein. May be involved in the establishment and maintenance of specific neuronal connections in the brain. In Homo sapiens (Human), this protein is Protocadherin alpha-9 (PCDHA9).